The sequence spans 415 residues: Succinate--CoA ligase [GDP-forming] subunit beta, mitochondrial (415 aa).

Residues Met1 to Phe19 constitute a mitochondrion transit peptide. Residues Lys28 to Phe258 form the ATP-grasp domain. GTP is bound by residues Gln39, Gly72 to Gly74, and Val130. 2 residues coordinate Mg(2+): Asn227 and Asp241. Substrate contacts are provided by residues Asn292 and Gly349–Val351.

Belongs to the succinate/malate CoA ligase beta subunit family. GTP-specific subunit beta subfamily. Heterodimer of an alpha and a beta subunit. The beta subunit determines specificity for GTP. Requires Mg(2+) as cofactor.

It is found in the mitochondrion. The enzyme catalyses GTP + succinate + CoA = succinyl-CoA + GDP + phosphate. It functions in the pathway carbohydrate metabolism; tricarboxylic acid cycle; succinate from succinyl-CoA (ligase route): step 1/1. GTP-specific succinyl-CoA synthetase functions in the citric acid cycle (TCA), coupling the hydrolysis of succinyl-CoA to the synthesis of GTP and thus represents the only step of substrate-level phosphorylation in the TCA. The beta subunit provides nucleotide specificity of the enzyme and binds the substrate succinate, while the binding sites for coenzyme A and phosphate are found in the alpha subunit. This chain is Succinate--CoA ligase [GDP-forming] subunit beta, mitochondrial, found in Caenorhabditis elegans.